Here is a 644-residue protein sequence, read N- to C-terminus: Type III restriction-modification enzyme EcoP15I Mod subunit (644 aa).

Residues 123-126 (DPPY) are binding of S-adenosyl methionine.

This sequence belongs to the N(4)/N(6)-methyltransferase family. Forms a homodimer capable of methylating the target sequence in the absence of Res. A heterotetramer with stoichiometry Res(2)Mod(2). A heterotrimer with stoichiometry Res(1)Mod(2).

The enzyme catalyses a 2'-deoxyadenosine in DNA + S-adenosyl-L-methionine = an N(6)-methyl-2'-deoxyadenosine in DNA + S-adenosyl-L-homocysteine + H(+). A beta subtype methylase that binds the system-specific DNA recognition site 5'-CAGCAG-3' and methylates A-5 (of only 1 strand as the other does not have an A residue). DNA restriction requires both the Res and Mod subunits. The A-5 nucleotide flips into the catalytic pocket of one Mod subunit for modification, while the other Mod subunit makes most of the DNA sequence-specific contacts. This is Type III restriction-modification enzyme EcoP15I Mod subunit from Escherichia coli.